Reading from the N-terminus, the 76-residue chain is Peptide ARACIN 1 (76 aa).

Residues 1–22 form the signal peptide; sequence MAMKTSHVLLLCLMFVIGFVEA. Positions 23–35 are cleaved as a propeptide — removed in mature form; sequence RRSDTGPDISTPP. Residues 36-38 carry the SxS motif essential for MIK2 binding motif; it reads SGS. The SCOOP motif signature appears at 36–49; the sequence is SGSCGASIAEFNSS. Residues 56–76 are disordered; the sequence is APPCRRPRLQNSEDVTHTTLP. The segment covering 64–76 has biased composition (polar residues); the sequence is LQNSEDVTHTTLP.

The protein belongs to the serine rich endogenous peptide (SCOOP) phytocytokine family. Interacts with MIK2 (via extracellular leucine-rich repeat domain); this interaction triggers the formation of complex between MIK2 and the BAK1/SERK3 and SERK4 coreceptors, and subsequent BAK1 activation by phosphorylation. As to expression, mainly expressed in young developing leaves, hydathodes, immature flowers and elongating pollen tubes.

Its subcellular location is the cell membrane. The protein resides in the secreted. It is found in the extracellular space. The protein localises to the apoplast. It localises to the endoplasmic reticulum. In terms of biological role, brassicaceae-specific phytocytokine (plant endogenous peptide released into the apoplast) perceived by MIK2 in a BAK1/SERK3 and SERK4 coreceptors-dependent manner, that modulates various physiological and antimicrobial processes including growth prevention and reactive oxygen species (ROS) response regulation. Inhibits the fungal growth of Alternaria brassicicola, Sclerotinia sclerotiorum, Fusarium graminearum, yeast (Saccharomyces) and Botrytis cinerea, thus being an antimicrobial peptide (AMP). Promotes resistance to A.brassicicola and B.cinerea. In Arabidopsis thaliana (Mouse-ear cress), this protein is Peptide ARACIN 1.